Consider the following 367-residue polypeptide: Alginate lyase (367 aa).

Positions 1 to 27 (MKTSHLIRIALPGALAAALLASQVSQA) are cleaved as a signal peptide. Substrate contacts are provided by residues 65–66 (SK), 138–139 (HT), and tyrosine 256.

It belongs to the polysaccharide lyase 5 family.

Its subcellular location is the periplasm. It carries out the reaction Eliminative cleavage of alginate to give oligosaccharides with 4-deoxy-alpha-L-erythro-hex-4-enuronosyl groups at their non-reducing ends and beta-D-mannuronate at their reducing end.. Catalyzes the depolymerization of alginate by cleaving the beta-1,4 glycosidic bond between two adjacent sugar residues via a beta-elimination mechanism. May serve to degrade mislocalized alginate that is trapped in the periplasmic space. Acts preferentially on non-acetylated alginate or its precursor mannuronan. Is able to catalyze cleavage adjacent to either mannuronate or guluronate residues in alginate. Exhaustive digestion of alginate by AlgL generates dimeric and trimeric products. In addition to its enzymatic function, AlgL appears to be required for alginate export, maybe as part of a multi-protein alginate-secretion complex. The protein is Alginate lyase of Pseudomonas aeruginosa (strain ATCC 15692 / DSM 22644 / CIP 104116 / JCM 14847 / LMG 12228 / 1C / PRS 101 / PAO1).